The chain runs to 61 residues: Hepcidin (61 aa).

The tract at residues 1 to 24 (LQVLTEEVGSIDSPVGEHQQPGGE) is disordered. The propeptide occupies 1 to 34 (LQVLTEEVGSIDSPVGEHQQPGGESMRLPEHFRF). 4 cysteine pairs are disulfide-bonded: C43-C59, C46-C49, C47-X55, and C50-C58.

Belongs to the hepcidin family.

It localises to the secreted. Functionally, seems to act as a signaling molecule involved in the maintenance of iron homeostasis. Seems to be required in conjunction with HFE to regulate both intestinal iron absorption and iron storage in macrophages. May also have antimicrobial activity. This is Hepcidin (hamp) from Oncorhynchus mykiss (Rainbow trout).